Reading from the N-terminus, the 204-residue chain is Endothelin-3 (204 aa).

Residues 1 to 17 form the signal peptide; that stretch reads MELRLWFLFGLTVTSAA. The tract at residues 18-71 is disordered; the sequence is GPVPRPQPGDAGRSGVPRAPSATKETMAMVATRGPSPRSSGQEQEPGPFGELAA. Positions 18 to 80 are excised as a propeptide; the sequence is GPVPRPQPGD…AKGGPVRYRA (63 aa). 2 disulfide bridges follow: Cys-83-Cys-97 and Cys-85-Cys-93. Residues 104 to 204 constitute a propeptide that is removed on maturation; it reads INTPERTVPY…KSRTDKARRL (101 aa). The segment at 115 to 140 is disordered; that stretch reads LSNHRGSVRGRRSAGPSPQSSQPSRG. The span at 127–140 shows a compositional bias: low complexity; sequence SAGPSPQSSQPSRG. The interval 144–158 is endothelin-like; it reads CACAESQDRACVYFC. The segment at 166-204 is disordered; it reads GASRTPETPDKEAGKPAGRATGGLHPRRLKSRTDKARRL.

The protein belongs to the endothelin/sarafotoxin family.

The protein localises to the secreted. In terms of biological role, endothelins are endothelium-derived vasoconstrictor peptides. The polypeptide is Endothelin-3 (EDN3) (Sus scrofa (Pig)).